We begin with the raw amino-acid sequence, 626 residues long: Methanol dehydrogenase [cytochrome c] subunit 1 (626 aa).

The first 27 residues, 1–27 (MSRFVTSVSALAMLALAPAALSSVAYA), serve as a signal peptide directing secretion. Cys130 and Cys131 form a disulfide bridge. Ca(2+) contacts are provided by Glu204 and Asn288. Asp330 (proton acceptor) is an active-site residue. Cys413 and Cys442 are joined by a disulfide.

This sequence belongs to the bacterial PQQ dehydrogenase family. In terms of assembly, heterotetramer composed of 2 alpha and 2 beta subunits. Pyrroloquinoline quinone serves as cofactor. The cofactor is Ca(2+).

It is found in the cell inner membrane. The enzyme catalyses 2 Fe(III)-[cytochrome cL] + a primary alcohol = 2 Fe(II)-[cytochrome cL] + an aldehyde + 2 H(+). Catalyzes the oxidation of primary alcohols including methanol. This is Methanol dehydrogenase [cytochrome c] subunit 1 (moxF) from Methylobacterium organophilum.